A 655-amino-acid chain; its full sequence is Ubiquilin-3 (655 aa).

The region spanning 22–98 is the Ubiquitin-like domain; that stretch reads IKVTVKTPKD…LVIKRQHRAM (77 aa). The interval 102 to 124 is disordered; sequence CPAASVPTQGPSPGSLPQPSSIY. Residues 110-122 are compositionally biased toward low complexity; the sequence is QGPSPGSLPQPSS. The STI1 domain occupies 194–233; that stretch reads NPHMQQLIQHNPEIGHILNNPEIMRQTLEFLRNPAMMQEM. Disordered stretches follow at residues 277–330, 364–399, and 412–447; these read PFAT…PDIR, ASALSQSQEPPPSVNRVPPSSPSSQEPGSGQPLPEE, and FLRYPTENSTGQGGDQDGAGKSSTGHSTNLPDLVSG. Residues 279-290 show a composition bias toward low complexity; the sequence is ATATTDNATTTT. The span at 318 to 330 shows a compositional bias: basic and acidic residues; the sequence is GRQDGDQDAPDIR. Over residues 377–395 the composition is skewed to low complexity; the sequence is VNRVPPSSPSSQEPGSGQP. Polar residues predominate over residues 432 to 441; it reads KSSTGHSTNL. The UBA domain occupies 609–655; the sequence is QLQPEAHFQVQLEQLRSMGFLNREANLQALIATGGDVDAAVEKLRQS.

As to expression, testis specific.

This chain is Ubiquilin-3 (UBQLN3), found in Homo sapiens (Human).